We begin with the raw amino-acid sequence, 1202 residues long: Caskin-2 (1202 aa).

ANK repeat units lie at residues 48–77, 81–110, 114–143, 147–176, 188–217, and 220–249; these read DGFS…TVDI, NGMR…AVNA, DGQI…NPCL, AKKT…CVAL, NYTT…EINR, and KTGT…DVNI. Residue Tyr253 is modified to Phosphotyrosine. Residues 281 to 347 enclose the SH3 domain; it reads SGILKVRALK…PPGIVEVVSK (67 aa). The disordered stretch occupies residues 355–460; sequence RLPSAPTPLR…GLHPPSLADN (106 aa). A phosphoserine mark is found at Ser358, Ser393, Ser396, Ser403, Ser406, and Ser409. A compositionally biased stretch (polar residues) spans 415 to 425; the sequence is SAGSGQSSEGT. Residue Ser471 is modified to Phosphoserine. SAM domains are found at residues 489-552 and 558-622; these read KDAQ…LSIA and YIPT…LAEL. Disordered regions lie at residues 676–1104 and 1116–1181; these read LQAA…APKP and GPKL…STKH. Ser725 bears the Phosphoserine mark. The span at 731 to 740 shows a compositional bias: basic and acidic residues; the sequence is NLPEGTERPP. A compositionally biased stretch (pro residues) spans 765–774; that stretch reads SPAPGPPPGA. 4 positions are modified to phosphoserine: Ser858, Ser877, Ser878, and Ser892. Residues 913–923 show a composition bias toward pro residues; it reads PSEPPGPPAPA. Residues 940–949 are compositionally biased toward low complexity; it reads PPSRGSSGEG. Composition is skewed to pro residues over residues 966-978 and 1018-1030; these read PAGP…PVPP and PAAP…PGES. Positions 1031 to 1051 are enriched in low complexity; the sequence is PPASSLPQPEPSSLPAQGVPT. Composition is skewed to pro residues over residues 1052–1068 and 1124–1133; these read PLAP…PCPG and GPRPVPPPRP. Over residues 1135 to 1151 the composition is skewed to polar residues; it reads STGTVGPGQAQQRLEQT. Basic and acidic residues predominate over residues 1161-1172; it reads AAEKSIGTKEQE.

May not bind CASK.

The protein localises to the cytoplasm. The polypeptide is Caskin-2 (CASKIN2) (Homo sapiens (Human)).